A 332-amino-acid polypeptide reads, in one-letter code: Holliday junction branch migration complex subunit RuvB (332 aa).

The segment at Met-1 to Tyr-181 is large ATPase domain (RuvB-L). ATP contacts are provided by residues Leu-20, Arg-21, Gly-62, Lys-65, Thr-66, Thr-67, Glu-128–Phe-130, Arg-171, Tyr-181, and Arg-218. Thr-66 contacts Mg(2+). Residues Ala-182–Asp-252 are small ATPAse domain (RuvB-S). Residues His-255–Lys-332 are head domain (RuvB-H). 4 residues coordinate DNA: Arg-291, Arg-310, Arg-312, and Arg-315.

It belongs to the RuvB family. As to quaternary structure, homohexamer. Forms an RuvA(8)-RuvB(12)-Holliday junction (HJ) complex. HJ DNA is sandwiched between 2 RuvA tetramers; dsDNA enters through RuvA and exits via RuvB. An RuvB hexamer assembles on each DNA strand where it exits the tetramer. Each RuvB hexamer is contacted by two RuvA subunits (via domain III) on 2 adjacent RuvB subunits; this complex drives branch migration. In the full resolvosome a probable DNA-RuvA(4)-RuvB(12)-RuvC(2) complex forms which resolves the HJ.

The protein localises to the cytoplasm. The enzyme catalyses ATP + H2O = ADP + phosphate + H(+). Functionally, the RuvA-RuvB-RuvC complex processes Holliday junction (HJ) DNA during genetic recombination and DNA repair, while the RuvA-RuvB complex plays an important role in the rescue of blocked DNA replication forks via replication fork reversal (RFR). RuvA specifically binds to HJ cruciform DNA, conferring on it an open structure. The RuvB hexamer acts as an ATP-dependent pump, pulling dsDNA into and through the RuvAB complex. RuvB forms 2 homohexamers on either side of HJ DNA bound by 1 or 2 RuvA tetramers; 4 subunits per hexamer contact DNA at a time. Coordinated motions by a converter formed by DNA-disengaged RuvB subunits stimulates ATP hydrolysis and nucleotide exchange. Immobilization of the converter enables RuvB to convert the ATP-contained energy into a lever motion, pulling 2 nucleotides of DNA out of the RuvA tetramer per ATP hydrolyzed, thus driving DNA branch migration. The RuvB motors rotate together with the DNA substrate, which together with the progressing nucleotide cycle form the mechanistic basis for DNA recombination by continuous HJ branch migration. Branch migration allows RuvC to scan DNA until it finds its consensus sequence, where it cleaves and resolves cruciform DNA. This Streptococcus pneumoniae serotype 19F (strain G54) protein is Holliday junction branch migration complex subunit RuvB.